A 304-amino-acid polypeptide reads, in one-letter code: tRNA pseudouridine synthase B (304 aa).

Asp-38 serves as the catalytic Nucleophile. The region spanning 227–302 is the PUA domain; that stretch reads LPKVEIYKDF…RIFKLKKVFK (76 aa).

The protein belongs to the pseudouridine synthase TruB family. Type 1 subfamily.

It carries out the reaction uridine(55) in tRNA = pseudouridine(55) in tRNA. Its function is as follows. Responsible for synthesis of pseudouridine from uracil-55 in the psi GC loop of transfer RNAs. This is tRNA pseudouridine synthase B from Thermosipho melanesiensis (strain DSM 12029 / CIP 104789 / BI429).